Here is a 253-residue protein sequence, read N- to C-terminus: PAXIP1-associated glutamate-rich protein 1A (253 aa).

Disordered stretches follow at residues Met1 to Pro108 and Leu126 to Tyr253. Residues Lys45–Glu66 show a composition bias toward basic and acidic residues. A sufficient for interaction with NCOA1 region spans residues Tyr115–Glu159. Thr137 is subject to Phosphothreonine. A compositionally biased stretch (acidic residues) spans Gln141 to Glu158. 2 positions are modified to phosphoserine: Ser142 and Ser147. A sufficient for interaction with ESR1 region spans residues Lys160–Tyr253. Residues Gln194–Arg222 are compositionally biased toward basic and acidic residues. Phosphoserine is present on Ser236. The segment covering Pro238–Phe247 has biased composition (polar residues).

In terms of assembly, component of the KMT2 family MLL2/MLL3 complex, at least composed of the histone methyltransferases KMT2D and/or KMT2C, the common subunits ASH2L, RBBP5, WDR5 and DPY30, and the complex type-specific subunits PAXIP1/PTIP, PAGR1, NCOA6 and KDM6A; PAXIP1 is required for the association with the MLL2/MLL3 complex. Forms a constitutive complex with PAXIP1/PTIP independently of the MLL2/MLL3 complex. Interacts with NCOA1, ESR1, NR3C1, AR.

The protein localises to the nucleus. Its association with the histone methyltransferase MLL2/MLL3 complex is suggesting a role in epigenetic transcriptional activation. However, in association with PAXIP1/PTIP is proposed to function at least in part independently of the MLL2/MLL3 complex. Proposed to be recruited by PAXIP1 to sites of DNA damage where the PAGR1:PAXIP1 complex is required for cell survival in response to DNA damage independently of the MLL2/MLL3 complex. However, its function in DNA damage has been questioned. During immunoglobulin class switching in activated B-cells is involved in transcription regulation of downstream switch regions at the immunoglobulin heavy-chain (Igh) locus independently of the MLL2/MLL3 complex. Involved in both estrogen receptor-regulated gene transcription and estrogen-stimulated G1/S cell-cycle transition. Acts as a transcriptional cofactor for nuclear hormone receptors. Inhibits the induction properties of several steroid receptors such as NR3C1, AR and PPARG; the mechanism of inhibition appears to be gene-dependent. May be involved in the regulation of the BMP pathway in extraembryonic development. The polypeptide is PAXIP1-associated glutamate-rich protein 1A (Mus musculus (Mouse)).